Here is a 328-residue protein sequence, read N- to C-terminus: Phosphate acyltransferase (328 aa).

This sequence belongs to the PlsX family. In terms of assembly, homodimer. Probably interacts with PlsY.

Its subcellular location is the cytoplasm. The enzyme catalyses a fatty acyl-[ACP] + phosphate = an acyl phosphate + holo-[ACP]. It functions in the pathway lipid metabolism; phospholipid metabolism. Catalyzes the reversible formation of acyl-phosphate (acyl-PO(4)) from acyl-[acyl-carrier-protein] (acyl-ACP). This enzyme utilizes acyl-ACP as fatty acyl donor, but not acyl-CoA. In Staphylococcus aureus (strain Mu3 / ATCC 700698), this protein is Phosphate acyltransferase.